The primary structure comprises 204 residues: Holliday junction branch migration complex subunit RuvA (204 aa).

The domain I stretch occupies residues M1–M64. Residues T65 to A143 form a domain II region. The flexible linker stretch occupies residues L144–G151. The domain III stretch occupies residues V152–R204.

The protein belongs to the RuvA family. Homotetramer. Forms an RuvA(8)-RuvB(12)-Holliday junction (HJ) complex. HJ DNA is sandwiched between 2 RuvA tetramers; dsDNA enters through RuvA and exits via RuvB. An RuvB hexamer assembles on each DNA strand where it exits the tetramer. Each RuvB hexamer is contacted by two RuvA subunits (via domain III) on 2 adjacent RuvB subunits; this complex drives branch migration. In the full resolvosome a probable DNA-RuvA(4)-RuvB(12)-RuvC(2) complex forms which resolves the HJ.

It is found in the cytoplasm. In terms of biological role, the RuvA-RuvB-RuvC complex processes Holliday junction (HJ) DNA during genetic recombination and DNA repair, while the RuvA-RuvB complex plays an important role in the rescue of blocked DNA replication forks via replication fork reversal (RFR). RuvA specifically binds to HJ cruciform DNA, conferring on it an open structure. The RuvB hexamer acts as an ATP-dependent pump, pulling dsDNA into and through the RuvAB complex. HJ branch migration allows RuvC to scan DNA until it finds its consensus sequence, where it cleaves and resolves the cruciform DNA. The sequence is that of Holliday junction branch migration complex subunit RuvA from Rhizobium leguminosarum bv. trifolii (strain WSM2304).